A 526-amino-acid chain; its full sequence is Hyaluronidase-5 (526 aa).

The signal sequence occupies residues 1–35 (MRVLYFKHSFFRSLLKSNGLPQTLLVFLLIPCYLT). Cystine bridges form between Cys-60/Cys-351, Cys-223/Cys-237, Cys-376/Cys-387, Cys-381/Cys-435, and Cys-437/Cys-443. Residue Glu-147 is the Proton donor of the active site. N-linked (GlcNAc...) asparagine glycans are attached at residues Asn-165 and Asn-179.

This sequence belongs to the glycosyl hydrolase 56 family. In terms of tissue distribution, expressed in testis, epididymal sperm and epididymides (at protein level). Expressed at highest levels in testis with lesser amounts in epididymal sperm.

Its subcellular location is the cell membrane. The protein localises to the cytoplasmic vesicle. It localises to the secretory vesicle. It is found in the acrosome membrane. The protein resides in the secreted. It carries out the reaction Random hydrolysis of (1-&gt;4)-linkages between N-acetyl-beta-D-glucosamine and D-glucuronate residues in hyaluronate.. Catalyzes the hydrolysis of hyaluronan into smaller oligosaccharide fragments. Does not appear to be essential for fertilization. The sequence is that of Hyaluronidase-5 from Mus musculus (Mouse).